The chain runs to 217 residues: Thiopurine S-methyltransferase (217 aa).

The S-adenosyl-L-methionine site is built by W10, L45, E66, and R127.

It belongs to the class I-like SAM-binding methyltransferase superfamily. TPMT family.

Its subcellular location is the cytoplasm. It catalyses the reaction S-adenosyl-L-methionine + a thiopurine = S-adenosyl-L-homocysteine + a thiopurine S-methylether.. The sequence is that of Thiopurine S-methyltransferase from Acinetobacter baylyi (strain ATCC 33305 / BD413 / ADP1).